The following is an 83-amino-acid chain: Mu-conotoxin-like PnMKLT1-014 (83 aa).

A signal peptide spans 1 to 22 (MNLTCMMIVAVLFLTAWTFVMA). The propeptide occupies 23-50 (DDSNNGLANLFSKSRYEMEDPEPSKLEK). Intrachain disulfides connect cysteine 54–cysteine 72, cysteine 61–cysteine 77, and cysteine 71–cysteine 82.

Belongs to the conotoxin O1 superfamily. In terms of tissue distribution, expressed by the venom duct.

The protein localises to the secreted. In terms of biological role, mu-conotoxins block voltage-gated sodium channels (Nav). The protein is Mu-conotoxin-like PnMKLT1-014 of Conus pennaceus (Feathered cone).